We begin with the raw amino-acid sequence, 87 residues long: Small ribosomal subunit protein bS20 (87 aa).

The tract at residues 1–20 (MANHKSAEKRARQTIKRTER) is disordered.

Belongs to the bacterial ribosomal protein bS20 family.

Its function is as follows. Binds directly to 16S ribosomal RNA. The protein is Small ribosomal subunit protein bS20 of Campylobacter lari (strain RM2100 / D67 / ATCC BAA-1060).